The sequence spans 186 residues: Elongation factor P (186 aa).

It belongs to the elongation factor P family.

It is found in the cytoplasm. The protein operates within protein biosynthesis; polypeptide chain elongation. In terms of biological role, involved in peptide bond synthesis. Stimulates efficient translation and peptide-bond synthesis on native or reconstituted 70S ribosomes in vitro. Probably functions indirectly by altering the affinity of the ribosome for aminoacyl-tRNA, thus increasing their reactivity as acceptors for peptidyl transferase. The protein is Elongation factor P of Shewanella sp. (strain W3-18-1).